The chain runs to 540 residues: Phenylalanine--tRNA ligase beta subunit (540 aa).

The B5 domain maps to 266–342; sequence LRPEKRTVSV…IAYGYDKIET (77 aa). The Mg(2+) site is built by D320, D326, E329, and D330.

Belongs to the phenylalanyl-tRNA synthetase beta subunit family. Type 2 subfamily. In terms of assembly, tetramer of two alpha and two beta subunits. Mg(2+) is required as a cofactor.

Its subcellular location is the cytoplasm. It carries out the reaction tRNA(Phe) + L-phenylalanine + ATP = L-phenylalanyl-tRNA(Phe) + AMP + diphosphate + H(+). The polypeptide is Phenylalanine--tRNA ligase beta subunit (Methanocorpusculum labreanum (strain ATCC 43576 / DSM 4855 / Z)).